Consider the following 165-residue polypeptide: Polcalcin Cup a 4 (165 aa).

EF-hand domains lie at glutamine 22–glutamate 57, valine 58–leucine 86, alanine 91–proline 126, and cysteine 127–aspartate 162. 19 residues coordinate Ca(2+): aspartate 35, asparagine 37, aspartate 39, lysine 41, glutamate 46, aspartate 71, aspartate 73, aspartate 75, tyrosine 77, glutamate 82, aspartate 104, aspartate 106, asparagine 108, threonine 110, glutamate 115, aspartate 140, asparagine 142, aspartate 144, and glutamate 151.

In terms of assembly, may exist as monomer and dimer. As to expression, expressed in mature pollen grains.

This Hesperocyparis arizonica (Arizona cypress) protein is Polcalcin Cup a 4.